The primary structure comprises 285 residues: ATP phosphoribosyltransferase (285 aa).

The protein belongs to the ATP phosphoribosyltransferase family. Long subfamily. The cofactor is Mg(2+).

The protein localises to the cytoplasm. It carries out the reaction 1-(5-phospho-beta-D-ribosyl)-ATP + diphosphate = 5-phospho-alpha-D-ribose 1-diphosphate + ATP. The protein operates within amino-acid biosynthesis; L-histidine biosynthesis; L-histidine from 5-phospho-alpha-D-ribose 1-diphosphate: step 1/9. With respect to regulation, feedback inhibited by histidine. Its function is as follows. Catalyzes the condensation of ATP and 5-phosphoribose 1-diphosphate to form N'-(5'-phosphoribosyl)-ATP (PR-ATP). Has a crucial role in the pathway because the rate of histidine biosynthesis seems to be controlled primarily by regulation of HisG enzymatic activity. The protein is ATP phosphoribosyltransferase of Methanocella arvoryzae (strain DSM 22066 / NBRC 105507 / MRE50).